Reading from the N-terminus, the 713-residue chain is Leucine-rich repeat neuronal protein 2 (713 aa).

The N-terminal stretch at 1-18 is a signal peptide; it reads MRLLVAPLLLAWVAGATA. The Extracellular segment spans residues 19–630; the sequence is AVPVVPWHVP…CHRALGDRPG (612 aa). In terms of domain architecture, LRRNT spans 20 to 69; sequence VPVVPWHVPCPPQCACQIRPWYTPRSSYREATTVDCNDLFLTAVPPALPA. 12 LRR repeats span residues 70–91, 94–115, 118–139, 142–163, 166–187, 190–211, 214–235, 238–259, 262–283, 286–305, 311–333, and 336–357; these read GTQT…ELGY, NLTE…DFHA, QLLS…SFAG, SLQE…AFSG, NLLR…WFEM, NLEI…NFRP, NLRS…ALEG, SLES…ALEQ, GLKF…DFAN, HLKE…DKFA, ELTK…AFHH, and QMET…TVES. A glycan (N-linked (GlcNAc...) asparagine) is linked at N94. One can recognise an LRRCT domain in the interval 369 to 422; sequence NPIRCDCVIRWANATGTRVRFIEPQSTLCAEPPDLQRLPVREVPFREMTDHCLP. N381 carries an N-linked (GlcNAc...) asparagine glycan. An Ig-like C2-type domain is found at 422–511; sequence PLISPRSFPP…LVGADTKTVS (90 aa). A disulfide bridge links C445 with C497. N-linked (GlcNAc...) asparagine glycans are attached at residues N555 and N583. Residues 631-651 form a helical membrane-spanning segment; the sequence is LIAILALAVLLLAAGLAAHLG. Over 652-713 the chain is Cytoplasmic; sequence TGQPRKGVGG…TLLPPLSQNS (62 aa).

Overamplified in malignant gliomas.

It is found in the membrane. The chain is Leucine-rich repeat neuronal protein 2 (LRRN2) from Homo sapiens (Human).